A 1825-amino-acid chain; its full sequence is Tail fiber protein (1825 aa).

Coiled coils occupy residues 393-466 (VDMS…NSLE), 681-701 (DGVQ…SQKV), 843-891 (KGDQ…NMLA), and 975-998 (DVAK…LQNI).

It localises to the virion. Its function is as follows. Structural protein, a component of a tail fiber. This chain is Tail fiber protein, found in Enterococcus faecalis (Streptococcus faecalis).